A 1872-amino-acid polypeptide reads, in one-letter code: Chitin synthase 6 (1872 aa).

The segment at 1–23 is disordered; the sequence is MAQHLPPVGGNGGAHTQPSLPAL. The 779-residue stretch at 1–779 folds into the Myosin motor domain; the sequence is MAQHLPPVGG…CWMEIAQLSD (779 aa). 104–111 contacts ATP; sequence GESGSGKT. Residues asparagine 123, asparagine 291, asparagine 428, and asparagine 559 are each glycosylated (N-linked (GlcNAc...) asparagine). Positions 587-652 are disordered; sequence VMQASVSSKP…VNKPSEEGAS (66 aa). The tract at residues 659–683 is actin-binding; the sequence is LDNVTKSFHAQNTNAYFVFCLKPND. N-linked (GlcNAc...) asparagine glycosylation is present at asparagine 661. A run of 2 helical transmembrane segments spans residues 881–901 and 920–940; these read WVFITWMLTFFVPEFLIQHLG and FIIWFSCLAAAFILVVFPMLV. The region spanning 944–1003 is the Cytochrome b5 heme-binding domain; that stretch reads QYVFTGEELSAYNGKDGKASYAAIRGQVFDIGSFIPRHPLPYLPSKLFTQYAGTDITGLF. 3 N-linked (GlcNAc...) asparagine glycosylation sites follow: asparagine 1030, asparagine 1055, and asparagine 1120. The chain crosses the membrane as a helical span at residues 1193–1213; sequence FILAVTIILCSIIAFKFLAAL. N-linked (GlcNAc...) asparagine glycans are attached at residues asparagine 1450 and asparagine 1556. 3 consecutive transmembrane segments (helical) span residues 1581–1601, 1614–1634, and 1641–1661; these read FIVFIDLLSTIIQPVTIAYIV, VPVLAFVLLAAVYGLQAIIFI, and MIAWMILYIIAMPIFSFGLPL. A DEK-C domain is found at 1814-1869; sequence LPSDDALLAEIREILRTADLMTVTKKGVKQELERRFGVNLDSRRAYINSATEALLS.

The protein belongs to the chitin synthase family. Class V subfamily.

The protein resides in the cell membrane. It carries out the reaction [(1-&gt;4)-N-acetyl-beta-D-glucosaminyl](n) + UDP-N-acetyl-alpha-D-glucosamine = [(1-&gt;4)-N-acetyl-beta-D-glucosaminyl](n+1) + UDP + H(+). In terms of biological role, polymerizes chitin, a structural polymer of the cell wall and septum, by transferring the sugar moiety of UDP-GlcNAc to the non-reducing end of the growing chitin polymer. Required for appressorium penetration and invasive growth. This chain is Chitin synthase 6, found in Pyricularia oryzae (strain 70-15 / ATCC MYA-4617 / FGSC 8958) (Rice blast fungus).